A 59-amino-acid polypeptide reads, in one-letter code: Arabinogalactan protein 13 (59 aa).

The signal sequence occupies residues 1 to 27 (MEAMKMRLFVAVLVAAMAFSAVQQAAA). 4-hydroxyproline is present on residues Pro-31, Pro-33, and Pro-35. O-linked (Ara...) hydroxyproline glycans are attached at residues Pro-31, Pro-33, and Pro-35. Ser-37 carries the GPI-anchor amidated serine lipid modification. The propeptide at 38–59 (DASLAIPAFFASVATLAFGFLF) is removed in mature form.

It belongs to the AG-peptide AGP family. Post-translationally, contains 4-hydroxyproline; hydroxylated on Pro-31, Pro-33 and Pro-35. In terms of processing, O-glycosylated on hydroxyprolines; noncontiguous hydroxylproline residues are glycosylated with arabinogalactan.

It is found in the cell membrane. In terms of biological role, proteoglycan that seems to be implicated in diverse developmental roles such as differentiation, cell-cell recognition, embryogenesis and programmed cell death. This is Arabinogalactan protein 13 from Arabidopsis thaliana (Mouse-ear cress).